Reading from the N-terminus, the 334-residue chain is Phosphate acyltransferase (334 aa).

The protein belongs to the PlsX family. As to quaternary structure, homodimer. Probably interacts with PlsY.

The protein resides in the cytoplasm. It carries out the reaction a fatty acyl-[ACP] + phosphate = an acyl phosphate + holo-[ACP]. It participates in lipid metabolism; phospholipid metabolism. Functionally, catalyzes the reversible formation of acyl-phosphate (acyl-PO(4)) from acyl-[acyl-carrier-protein] (acyl-ACP). This enzyme utilizes acyl-ACP as fatty acyl donor, but not acyl-CoA. This chain is Phosphate acyltransferase, found in Mycoplasmopsis agalactiae (strain NCTC 10123 / CIP 59.7 / PG2) (Mycoplasma agalactiae).